The chain runs to 326 residues: Putative ribose-phosphate pyrophosphokinase 2 (326 aa).

ATP contacts are provided by residues Asp-43–Glu-45 and Arg-102–Gln-103. His-136 contributes to the Mg(2+) binding site. D-ribose 5-phosphate contacts are provided by residues Asp-225 and Asn-229 to Thr-233.

The protein belongs to the ribose-phosphate pyrophosphokinase family. Class I subfamily. In terms of assembly, homohexamer. The cofactor is Mg(2+).

Its subcellular location is the cytoplasm. The catalysed reaction is D-ribose 5-phosphate + ATP = 5-phospho-alpha-D-ribose 1-diphosphate + AMP + H(+). It participates in metabolic intermediate biosynthesis; 5-phospho-alpha-D-ribose 1-diphosphate biosynthesis; 5-phospho-alpha-D-ribose 1-diphosphate from D-ribose 5-phosphate (route I): step 1/1. Functionally, involved in the biosynthesis of the central metabolite phospho-alpha-D-ribosyl-1-pyrophosphate (PRPP) via the transfer of pyrophosphoryl group from ATP to 1-hydroxyl of ribose-5-phosphate (Rib-5-P). The polypeptide is Putative ribose-phosphate pyrophosphokinase 2 (Streptococcus pyogenes serotype M18 (strain MGAS8232)).